A 351-amino-acid chain; its full sequence is Cell cycle control protein 50B (351 aa).

The Cytoplasmic segment spans residues 1-33; the sequence is MTWSATARGAHQPDNTAFTQQRLPAWQPLLSAS. The chain crosses the membrane as a helical span at residues 34–54; that stretch reads IALPLFFCAGLAFIGLGLGLY. Over 55 to 315 the chain is Exoplasmic loop; it reads YSSNGIKELE…SISWMGGKNP (261 aa). N-linked (GlcNAc...) asparagine glycans are attached at residues N75, N213, and N286. Residues 316–336 traverse the membrane as a helical segment; the sequence is FLGIAYLVVGSLCILTGFVML. At 337–351 the chain is on the cytoplasmic side; sequence VVYIRYQDQDDDDEE.

The protein belongs to the CDC50/LEM3 family. In terms of assembly, component of a P4-ATPase flippase complex which consists of a catalytic alpha subunit and an accessory beta subunit. Interacts with alpha subunits ATP8A1, ATP8B1, ATP8B2 and ATP8B4.

Its subcellular location is the cell membrane. Accessory component of a P4-ATPase flippase complex which catalyzes the hydrolysis of ATP coupled to the transport of aminophospholipids from the outer to the inner leaflet of various membranes and ensures the maintenance of asymmetric distribution of phospholipids. Phospholipid translocation also seems to be implicated in vesicle formation and in uptake of lipid signaling molecules. The beta subunit may assist in binding of the phospholipid substrate. Can mediate the export of alpha subunits ATP8A1, ATP8B1, ATP8B2 and ATP8B4 from the ER to the plasma membrane. In Homo sapiens (Human), this protein is Cell cycle control protein 50B (TMEM30B).